The sequence spans 275 residues: Apoptosis inhibitor 1 (275 aa).

BIR repeat units follow at residues 24 to 91 (LIER…CVYA) and 126 to 193 (PSAR…CYFV). The Zn(2+) site is built by cysteine 163, cysteine 166, histidine 183, and cysteine 190. The RING-type zinc-finger motif lies at 227-263 (CKVCLERQRDAVLLPCRHFCVCMQCYFALDGKCPTCR).

Functionally, acts by blocking cellular apoptosis rather than by preventing viral stimulation of apoptosis. This chain is Apoptosis inhibitor 1 (IAP1), found in Orgyia pseudotsugata (Douglas-fir tussock moth).